The following is a 337-amino-acid chain: Nucleoid-associated protein Avin_11450 (337 aa).

It belongs to the YejK family.

Its subcellular location is the cytoplasm. The protein resides in the nucleoid. The polypeptide is Nucleoid-associated protein Avin_11450 (Azotobacter vinelandii (strain DJ / ATCC BAA-1303)).